The chain runs to 201 residues: FMN-dependent NADH:quinone oxidoreductase (201 aa).

FMN is bound by residues serine 10, 16 to 18, 96 to 99, and 140 to 143; these read SQS, MYNF, and SRGG.

Belongs to the azoreductase type 1 family. As to quaternary structure, homodimer. The cofactor is FMN.

It catalyses the reaction 2 a quinone + NADH + H(+) = 2 a 1,4-benzosemiquinone + NAD(+). The catalysed reaction is N,N-dimethyl-1,4-phenylenediamine + anthranilate + 2 NAD(+) = 2-(4-dimethylaminophenyl)diazenylbenzoate + 2 NADH + 2 H(+). Its function is as follows. Quinone reductase that provides resistance to thiol-specific stress caused by electrophilic quinones. In terms of biological role, also exhibits azoreductase activity. Catalyzes the reductive cleavage of the azo bond in aromatic azo compounds to the corresponding amines. This chain is FMN-dependent NADH:quinone oxidoreductase, found in Salmonella paratyphi A (strain ATCC 9150 / SARB42).